Reading from the N-terminus, the 329-residue chain is Quinone-oxidoreductase homolog, chloroplastic (329 aa).

The protein belongs to the zinc-containing alcohol dehydrogenase family. Quinone oxidoreductase subfamily. Post-translationally, the transit peptide is not cleaved.

The protein localises to the plastid. The protein resides in the chloroplast inner membrane. This Spinacia oleracea (Spinach) protein is Quinone-oxidoreductase homolog, chloroplastic (QOR).